The sequence spans 633 residues: Probable extracellular metalloproteinase 5 (633 aa).

The signal sequence occupies residues 1-20 (MHGLLLAAAGLLSLPLHVLA). The propeptide occupies 21 to 244 (HPQPSTNLAG…VHNVVDYVSH (224 aa)). N-linked (GlcNAc...) asparagine glycosylation occurs at N285. A Zn(2+)-binding site is contributed by H428. E429 is an active-site residue. Zn(2+) is bound at residue H432. 2 N-linked (GlcNAc...) asparagine glycosylation sites follow: N592 and N621.

This sequence belongs to the peptidase M36 family. The cofactor is Zn(2+).

Its subcellular location is the secreted. Functionally, secreted metalloproteinase probably acting as a virulence factor. The polypeptide is Probable extracellular metalloproteinase 5 (MEP5) (Arthroderma benhamiae (strain ATCC MYA-4681 / CBS 112371) (Trichophyton mentagrophytes)).